The following is a 1235-amino-acid chain: Phosphorylase b kinase regulatory subunit alpha, liver isoform (1235 aa).

Phosphoserine is present on residues Ser-697, Ser-731, and Ser-737. A calmodulin-binding region spans residues 808–838 (LSELYGKAGLNQEWGLIRYISGLLRKKVEVL). Low complexity predominate over residues 976 to 986 (SSASSPAISIH). A disordered region spans residues 976 to 1002 (SSASSPAISIHEVGHTGVTKTERSGIN). Residues Ser-984, Ser-1016, and Ser-1044 each carry the phosphoserine modification. The span at 1032–1053 (AYSKSVRSSTPSSPTGTSSSDS) shows a compositional bias: low complexity. Residues 1032–1060 (AYSKSVRSSTPSSPTGTSSSDSGGHHISW) form a disordered region. The tract at residues 1059-1099 (SWGERQGQWLRRRRLDGAINRVPVGFYQRVWKILQKCHGLS) is calmodulin-binding. Residue Cys-1232 is the site of S-farnesyl cysteine attachment.

Belongs to the phosphorylase b kinase regulatory chain family. Hexadecamer of 4 heterotetramers, each composed of alpha, beta, gamma, and delta subunits. Alpha (PHKA1 or PHKA2) and beta (PHKB) are regulatory subunits, gamma (PHKG1 or PHKG2) is the catalytic subunit, and delta is calmodulin. Post-translationally, although the final Cys may be farnesylated, the terminal tripeptide is probably not removed, and the C-terminus is not methylated. Predominantly expressed in liver and other non-muscle tissues.

The protein resides in the cell membrane. It functions in the pathway glycan biosynthesis; glycogen metabolism. With respect to regulation, by phosphorylation of various serine residues and by calcium. Phosphorylase b kinase catalyzes the phosphorylation of serine in certain substrates, including troponin I. The alpha chain may bind calmodulin. This chain is Phosphorylase b kinase regulatory subunit alpha, liver isoform (PHKA2), found in Oryctolagus cuniculus (Rabbit).